A 402-amino-acid polypeptide reads, in one-letter code: Phosphoglycerate kinase (402 aa).

Substrate contacts are provided by residues 24 to 26 (DFN), Arg-40, 63 to 66 (HFGR), Arg-122, and Arg-155. ATP contacts are provided by residues Lys-206, Gly-297, Glu-328, and 358 to 361 (GGDS).

Belongs to the phosphoglycerate kinase family. Monomer.

Its subcellular location is the cytoplasm. It carries out the reaction (2R)-3-phosphoglycerate + ATP = (2R)-3-phospho-glyceroyl phosphate + ADP. It functions in the pathway carbohydrate degradation; glycolysis; pyruvate from D-glyceraldehyde 3-phosphate: step 2/5. The chain is Phosphoglycerate kinase from Prochlorococcus marinus (strain MIT 9515).